We begin with the raw amino-acid sequence, 357 residues long: MKKTVKALAAYQAELPVETVKAKYGLQHLARLSANESVYGPSPKVAQAVRAVSDDILGYYPDGQATELREAVAKLNHVDPQHLVFGAGADELIELLTRVVLEPGSNIIIPNPTFGEYAMHAQIEQSTTKKIPVNVDNGNVDFDAILDAIDDKTAMVWIANPNNPTGVFETTSSIKRFLDKLPANITLVVDEAYYDFVDEPDATVAPLVAEYTNLVVLRTLSKAYGLANLRVGYGIMQDPLYSAMQAVRLPYNLSTYQIAGGTAAVLDQEYLQKNVQRFQVERQKFQDFLTKNKFKFYESQANFIWIKVGETKKVGQKLLEQGFQVNDRLNPEWIRIALGTPEDNAELKLAFLKATNK.

Lys222 carries the post-translational modification N6-(pyridoxal phosphate)lysine.

The protein belongs to the class-II pyridoxal-phosphate-dependent aminotransferase family. Histidinol-phosphate aminotransferase subfamily. In terms of assembly, homodimer. It depends on pyridoxal 5'-phosphate as a cofactor.

The catalysed reaction is L-histidinol phosphate + 2-oxoglutarate = 3-(imidazol-4-yl)-2-oxopropyl phosphate + L-glutamate. It participates in amino-acid biosynthesis; L-histidine biosynthesis; L-histidine from 5-phospho-alpha-D-ribose 1-diphosphate: step 7/9. The chain is Histidinol-phosphate aminotransferase from Leuconostoc mesenteroides subsp. mesenteroides (strain ATCC 8293 / DSM 20343 / BCRC 11652 / CCM 1803 / JCM 6124 / NCDO 523 / NBRC 100496 / NCIMB 8023 / NCTC 12954 / NRRL B-1118 / 37Y).